The sequence spans 138 residues: Large ribosomal subunit protein uL16 (138 aa).

Over residues 1–13 the composition is skewed to basic residues; it reads MLQPARRKYRKEQ. Positions 1-22 are disordered; that stretch reads MLQPARRKYRKEQKGRNTGIAT.

The protein belongs to the universal ribosomal protein uL16 family. In terms of assembly, part of the 50S ribosomal subunit.

Binds 23S rRNA and is also seen to make contacts with the A and possibly P site tRNAs. This chain is Large ribosomal subunit protein uL16, found in Delftia acidovorans (strain DSM 14801 / SPH-1).